The following is a 215-amino-acid chain: tRNA (guanine-N(7)-)-methyltransferase (215 aa).

Residues Glu-43, Glu-68, Asp-95, and Asp-117 each contribute to the S-adenosyl-L-methionine site. The active site involves Asp-117. Residues Lys-121, Asp-153, and Thr-190–Glu-193 contribute to the substrate site.

This sequence belongs to the class I-like SAM-binding methyltransferase superfamily. TrmB family.

The enzyme catalyses guanosine(46) in tRNA + S-adenosyl-L-methionine = N(7)-methylguanosine(46) in tRNA + S-adenosyl-L-homocysteine. Its pathway is tRNA modification; N(7)-methylguanine-tRNA biosynthesis. Functionally, catalyzes the formation of N(7)-methylguanine at position 46 (m7G46) in tRNA. The polypeptide is tRNA (guanine-N(7)-)-methyltransferase (Staphylococcus epidermidis (strain ATCC 35984 / DSM 28319 / BCRC 17069 / CCUG 31568 / BM 3577 / RP62A)).